The chain runs to 207 residues: uncharacterized protein (207 aa).

An N-terminal signal peptide occupies residues 1-19 (MRHGLLALICWLCCVVAHS).

To P.aeruginosa PA4490 and T.maritima TM0986.

This is an uncharacterized protein from Escherichia coli (strain K12).